A 638-amino-acid polypeptide reads, in one-letter code: uncharacterized protein (638 aa).

A signal peptide spans 1–31 (MKFIKFNDSTIDSFLFMMLTDLAKTLTKSEA). Composition is skewed to basic and acidic residues over residues 247-256 (EEKKAPKLSD), 273-284 (EEMPTWHRETEA), 301-310 (DLGKDASREG), and 329-342 (RKDY…ESQK). Disordered stretches follow at residues 247–285 (EEKK…TEAP) and 301–354 (DLGK…ADGK). In terms of domain architecture, VWFA spans 445–632 (FTLLVDCSAS…DVLYPLLKKL (188 aa)).

This is an uncharacterized protein from Bacillus subtilis (strain 168).